We begin with the raw amino-acid sequence, 149 residues long: Cytochrome c-type biogenesis protein CcmE (149 aa).

The Cytoplasmic portion of the chain corresponds to 1-8; the sequence is MNPKRKQR. Residues 9 to 29 traverse the membrane as a helical; Signal-anchor for type II membrane protein segment; sequence LIIVSFLVIGVSATVGLIMAA. Topologically, residues 30–149 are periplasmic; that stretch reads LSSNVNHFYN…AQDAAPAQTY (120 aa). Heme-binding residues include His-124 and Tyr-128.

The protein belongs to the CcmE/CycJ family.

It localises to the cell inner membrane. Its function is as follows. Heme chaperone required for the biogenesis of c-type cytochromes. Transiently binds heme delivered by CcmC and transfers the heme to apo-cytochromes in a process facilitated by CcmF and CcmH. The protein is Cytochrome c-type biogenesis protein CcmE of Hahella chejuensis (strain KCTC 2396).